The following is a 161-amino-acid chain: Putative pre-16S rRNA nuclease (161 aa).

This sequence belongs to the YqgF nuclease family.

The protein localises to the cytoplasm. In terms of biological role, could be a nuclease involved in processing of the 5'-end of pre-16S rRNA. This is Putative pre-16S rRNA nuclease from Prochlorococcus marinus (strain MIT 9313).